The primary structure comprises 217 residues: Small ribosomal subunit protein uS3c (217 aa).

Residues 47–119 (VRTHIKSSSN…KLHIAIEKVA (73 aa)) enclose the KH type-2 domain.

The protein belongs to the universal ribosomal protein uS3 family. Part of the 30S ribosomal subunit.

It is found in the plastid. The protein resides in the chloroplast. The chain is Small ribosomal subunit protein uS3c (rps3) from Pinus thunbergii (Japanese black pine).